The sequence spans 318 residues: Cobalamin biosynthesis protein CobD (318 aa).

The next 5 membrane-spanning stretches (helical) occupy residues 56–76 (VLWL…LWLM), 78–98 (EINP…LLAG), 153–173 (VDGV…LAMA), 204–224 (LANW…AWLI), and 298–318 (MMAS…LVGI).

Belongs to the CobD/CbiB family.

Its subcellular location is the cell membrane. It functions in the pathway cofactor biosynthesis; adenosylcobalamin biosynthesis. Converts cobyric acid to cobinamide by the addition of aminopropanol on the F carboxylic group. This Yersinia enterocolitica serotype O:8 / biotype 1B (strain NCTC 13174 / 8081) protein is Cobalamin biosynthesis protein CobD.